We begin with the raw amino-acid sequence, 152 residues long: SKP1-like protein 8 (152 aa).

The segment at 94 to 152 is interaction with the F-box domain of F-box proteins; sequence TNAANFLNNKSLLHLAGQTVADMIKGNTPKQMREFFNIENDLTPEEEAAIRRENKWAFE.

It belongs to the SKP1 family. As to quaternary structure, part of a SCF (SKP1-cullin-F-box) protein ligase complex. In terms of tissue distribution, restricted to siliques.

It is found in the nucleus. It functions in the pathway protein modification; protein ubiquitination. Its function is as follows. Involved in ubiquitination and subsequent proteasomal degradation of target proteins. Together with CUL1, RBX1 and a F-box protein, it forms a SCF E3 ubiquitin ligase complex. The functional specificity of this complex depends on the type of F-box protein. In the SCF complex, it serves as an adapter that links the F-box protein to CUL1. This is SKP1-like protein 8 (ASK8) from Arabidopsis thaliana (Mouse-ear cress).